A 360-amino-acid polypeptide reads, in one-letter code: Peptide chain release factor 1 (360 aa).

Residue Gln-235 is modified to N5-methylglutamine. The disordered stretch occupies residues 285–311 (KRQQAQASERRNLLGSGDRSDRHRTYN). Residues 292–308 (SERRNLLGSGDRSDRHR) show a composition bias toward basic and acidic residues.

It belongs to the prokaryotic/mitochondrial release factor family. In terms of processing, methylated by PrmC. Methylation increases the termination efficiency of RF1.

Its subcellular location is the cytoplasm. In terms of biological role, peptide chain release factor 1 directs the termination of translation in response to the peptide chain termination codons UAG and UAA. This is Peptide chain release factor 1 from Hamiltonella defensa subsp. Acyrthosiphon pisum (strain 5AT).